A 77-amino-acid polypeptide reads, in one-letter code: Acyl carrier protein (77 aa).

In terms of domain architecture, Carrier spans 1-76 (MENFDKVKDI…DAVKYINSLE (76 aa)). At S36 the chain carries O-(pantetheine 4'-phosphoryl)serine.

The protein belongs to the acyl carrier protein (ACP) family. Post-translationally, 4'-phosphopantetheine is transferred from CoA to a specific serine of apo-ACP by AcpS. This modification is essential for activity because fatty acids are bound in thioester linkage to the sulfhydryl of the prosthetic group.

Its subcellular location is the cytoplasm. It functions in the pathway lipid metabolism; fatty acid biosynthesis. Carrier of the growing fatty acid chain in fatty acid biosynthesis. The protein is Acyl carrier protein of Staphylococcus epidermidis (strain ATCC 12228 / FDA PCI 1200).